We begin with the raw amino-acid sequence, 550 residues long: MTKYVFVTGGVVSSLGKGIAAASLAAILESRGLQVTLLKLDPYINVDPGTMSPFQHGEVFVTEDGAETDLDLGHYERFISARMRKVNNFTTGQIYESVLRKERRGDYLGKTVQVIPHITNEIQDFVARGAEAAWNGATDVAIVEIGGTVGDIESLPFLEAARQMSLRMGRNNAAFVHLTLVPYIASAGELKTKPTQHSVQKLREIGIYPNVLLCRADRRIPDDERAKISMFSNVPLDAVISVWDVDSIYKIPAMLHKQGVDNIVCEALGLTPPPADLSMWDNLVDALEHPQDSVTIGMVGKYVDLTESYKSLSEALVHAGIHTRSKVNIEYIDSEDIETRGTDQLKHLDAILVPGGFGKRGTEGKIAAIRYARENGVPYLGICLGMQLAVIEFARHVAGLGGANSTEFDPAAPHPVVALITEWMDREGRVERRDNSSDLGGTMRKGAQRCPIRPGTRAQSIYGDDVNERHRHRYEVNNVYVPRLEDAGMVISARTPTENLPEMMELPSHPWFVGVQFHPEFTSTPRDGHPLFSSYIRAALEHKAQRAKEA.

Positions 1-270 (MTKYVFVTGG…DNIVCEALGL (270 aa)) are amidoligase domain. A CTP-binding site is contributed by Ser-13. Position 13 (Ser-13) interacts with UTP. Residues 14–19 (SLGKGI) and Asp-71 contribute to the ATP site. 2 residues coordinate Mg(2+): Asp-71 and Glu-144. Residues 151-153 (DIE), 191-196 (KTKPTQ), and Lys-227 each bind CTP. Residues 191–196 (KTKPTQ) and Lys-227 contribute to the UTP site. Residues 295-545 (TIGMVGKYVD…IRAALEHKAQ (251 aa)) form the Glutamine amidotransferase type-1 domain. Residue Gly-356 participates in L-glutamine binding. Cys-383 serves as the catalytic Nucleophile; for glutamine hydrolysis. Residues 384 to 387 (LGMQ) and Glu-407 contribute to the L-glutamine site. The segment at 430–459 (VERRDNSSDLGGTMRKGAQRCPIRPGTRAQ) is disordered. Position 473 (Arg-473) interacts with L-glutamine. Residues His-518 and Glu-520 contribute to the active site.

This sequence belongs to the CTP synthase family. Homotetramer.

It catalyses the reaction UTP + L-glutamine + ATP + H2O = CTP + L-glutamate + ADP + phosphate + 2 H(+). The catalysed reaction is L-glutamine + H2O = L-glutamate + NH4(+). The enzyme catalyses UTP + NH4(+) + ATP = CTP + ADP + phosphate + 2 H(+). It participates in pyrimidine metabolism; CTP biosynthesis via de novo pathway; CTP from UDP: step 2/2. With respect to regulation, allosterically activated by GTP, when glutamine is the substrate; GTP has no effect on the reaction when ammonia is the substrate. The allosteric effector GTP functions by stabilizing the protein conformation that binds the tetrahedral intermediate(s) formed during glutamine hydrolysis. Inhibited by the product CTP, via allosteric rather than competitive inhibition. In terms of biological role, catalyzes the ATP-dependent amination of UTP to CTP with either L-glutamine or ammonia as the source of nitrogen. Regulates intracellular CTP levels through interactions with the four ribonucleotide triphosphates. In Bordetella parapertussis (strain 12822 / ATCC BAA-587 / NCTC 13253), this protein is CTP synthase.